The sequence spans 1523 residues: Slit homolog 3 protein (1523 aa).

The signal sequence occupies residues 1–33 (MAPGRTGAGAAVRARLALALALASILSGPPAAA). The LRRNT domain occupies 34–61 (CPTKCTCSAASVDCHGLGLRAVPRGIPR). LRR repeat units lie at residues 62–83 (NAERLDLDRNNITRITKMDFTG), 86–107 (NLRVLHLEDNQVSVIERGAFQD), 110–131 (QLERLRLNKNKLQVLPELLFQS), 134–155 (KLTRLDLSENQIQGIPRKAFRG), 158–179 (GVKNLQLDNNHISCIEDGAFRA), and 182–203 (DLEILTLNNNNISRILVTSFNH). A glycan (N-linked (GlcNAc...) asparagine) is linked at N72. A glycan (N-linked (GlcNAc...) asparagine) is linked at N192. The 51-residue stretch at 215 to 265 (NHLYCDCHLAWLSDWLRQRRTIGQFTLCMAPVHLRGFSVADVQKKEYVCPG) folds into the LRRCT 1 domain. The region spanning 271-307 (PACNANSLSCPSACSCSNNIVDCRGKGLTEIPANLPE) is the LRRNT 2 domain. An intrachain disulfide couples C284 to C293. LRR repeat units lie at residues 308-329 (GIVEIRLEQNSIKSIPAGAFIQ), 332-353 (KLKRIDISKNQISDIAPDAFQG), 356-377 (SLTSLVLYGNKITEIPKGLFDG), 380-401 (SLQLLLLNANKINCLRVNTFQD), and 404-425 (NLNLLSLYDNKLQTISKGLFAP). Residues 437–487 (NPFVCDCHLKWLADYLQDNPIETSGARCSSPRRLANKRISQIKSKKFRCSG) enclose the LRRCT 2 domain. Intrachain disulfides connect C441–C464, C443–C485, C505–C511, and C509–C518. Positions 496–532 (SSECFMDLVCPEKCRCEGTIVDCSNQKLSRIPSHLPE) constitute an LRRNT 3 domain. 5 LRR repeats span residues 533 to 554 (YTTDLRLNDNDIAVLEATGIFK), 558 to 579 (NLRKINLSNNRIKEVREGAFDG), 582 to 603 (GVQELMLTGNQLETMHGRMFRG), 606 to 627 (GLKTLMLRSNLISCVNNDTFAG), and 630 to 651 (SVRLLSLYDNRITTISPGAFTT). An N-linked (GlcNAc...) asparagine glycan is attached at N563. An N-linked (GlcNAc...) asparagine glycan is attached at N622. Residues 663 to 713 (NPFNCNCHMAWLGRWLRKRRIVSGNPRCQKPFFLKEIPIQDVAIQDFTCEG) enclose the LRRCT 3 domain. Disulfide bonds link C667–C690 and C669–C711. The LRRNT 4 domain occupies 716 to 752 (ENSCQLSPRCPEQCTCVETVVRCSNRGLHTLPKGMPK). 4 LRR repeats span residues 753-774 (DVTELYLEGNHLTAVPKELSTF), 776-797 (QLTLIDLSNNSISMLTNHTFSN), 800-821 (HLSTLILSYNRLRCIPVHAFNG), and 824-845 (SLRVLTLHGNDISSVPEGSFND). Residues N784, N792, and N797 are each glycosylated (N-linked (GlcNAc...) asparagine). Residues 857–907 (NPLHCDCSLRWLSEWIKAGYKEPGIARCSSPESMADRLLLTTPTHRFQCKG) form the LRRCT 4 domain. EGF-like domains are found at residues 918 to 953 (NACLSSPCKNNGTCSQDPVEQYRCTCPYSYKGKDCT), 955 to 994 (PINTCVQNPCQHGGTCHLSESHRDGFSCSCPLGFEGQRCE), 996 to 1032 (NPDDCEDNDCENSATCVDGINNYACVCPPNYTGELCD), 1034 to 1072 (VIDYCVPEMNLCQHEAKCISLDKGFRCECVPGYSGKLCE), 1074 to 1110 (DNDDCVAHKCRHGAQCVDAVNGYTCICPQGFSGLFCE), and 1119 to 1155 (QTSPCDQYECQNGAQCIVVQQEPTCRCPPGFAGPRCE). Disulfide bonds link C920–C931, C925–C941, C943–C952, C959–C970, C964–C982, C984–C993, C1000–C1011, C1005–C1020, C1022–C1031, C1038–C1051, C1045–C1060, C1062–C1071, C1078–C1089, C1083–C1098, C1100–C1109, C1123–C1134, C1128–C1143, and C1145–C1154. Residue N928 is glycosylated (N-linked (GlcNAc...) asparagine). An N-linked (GlcNAc...) asparagine glycan is attached at N1025. The Laminin G-like domain maps to 1158-1332 (ITVNFVGKDS…PQSLGVSPGC (175 aa)). 2 N-linked (GlcNAc...) asparagine glycosylation sites follow: N1181 and N1247. Disulfide bonds link C1305-C1332, C1355-C1364, C1372-C1382, C1377-C1391, and C1393-C1402. EGF-like domains lie at 1340–1365 (HGLCRSVEKDSVVCECHPGWTGPLCD) and 1368–1403 (AQDPCLGHSCSHGTCVATGNSYVCKCAEGYEGPLCD). N1406 carries N-linked (GlcNAc...) asparagine glycosylation. In terms of domain architecture, EGF-like 9 spans 1408–1444 (SANACSAFKCHHGQCHISDRGEPYCLCQPGFSGNHCE). Intrachain disulfides connect C1412–C1422, C1417–C1432, C1434–C1443, C1449–C1487, C1467–C1501, C1478–C1517, and C1482–C1519. The region spanning 1449–1523 (CLGEIVREAI…HLECGCRECS (75 aa)) is the CTCK domain.

The protein resides in the secreted. Functionally, may act as molecular guidance cue in cellular migration, and function may be mediated by interaction with roundabout homolog receptors. This Rattus norvegicus (Rat) protein is Slit homolog 3 protein (Slit3).